A 123-amino-acid polypeptide reads, in one-letter code: NADH-quinone oxidoreductase subunit A (123 aa).

The next 3 helical transmembrane spans lie at 6-26, 66-86, and 93-113; these read LTPY…AMLI, VVAL…PWAV, and WFGY…LIYI.

It belongs to the complex I subunit 3 family. In terms of assembly, NDH-1 is composed of 14 different subunits. Subunits NuoA, H, J, K, L, M, N constitute the membrane sector of the complex.

The protein resides in the cell inner membrane. The catalysed reaction is a quinone + NADH + 5 H(+)(in) = a quinol + NAD(+) + 4 H(+)(out). NDH-1 shuttles electrons from NADH, via FMN and iron-sulfur (Fe-S) centers, to quinones in the respiratory chain. The immediate electron acceptor for the enzyme in this species is believed to be ubiquinone. Couples the redox reaction to proton translocation (for every two electrons transferred, four hydrogen ions are translocated across the cytoplasmic membrane), and thus conserves the redox energy in a proton gradient. The polypeptide is NADH-quinone oxidoreductase subunit A (Myxococcus xanthus (strain DK1622)).